A 167-amino-acid chain; its full sequence is Thiol peroxidase (167 aa).

A Thioredoxin domain is found at 18-167 (VKVGDQAPDF…PIEAAKALVK (150 aa)). The active-site Cysteine sulfenic acid (-SOH) intermediate is the Cys-60. Cys-60 and Cys-94 are disulfide-bonded.

This sequence belongs to the peroxiredoxin family. Tpx subfamily. Homodimer.

It carries out the reaction a hydroperoxide + [thioredoxin]-dithiol = an alcohol + [thioredoxin]-disulfide + H2O. In terms of biological role, thiol-specific peroxidase that catalyzes the reduction of hydrogen peroxide and organic hydroperoxides to water and alcohols, respectively. Plays a role in cell protection against oxidative stress by detoxifying peroxides. In Bacillus subtilis (strain 168), this protein is Thiol peroxidase.